The chain runs to 258 residues: NAD kinase (258 aa).

Asp51 acts as the Proton acceptor in catalysis. Residues 51 to 52, Arg56, 119 to 120, Lys130, Asp149, 160 to 165, and Ala184 each bind NAD(+); these read DG, ND, and TAYSLS.

The protein belongs to the NAD kinase family. The cofactor is a divalent metal cation.

The protein resides in the cytoplasm. The catalysed reaction is NAD(+) + ATP = ADP + NADP(+) + H(+). Involved in the regulation of the intracellular balance of NAD and NADP, and is a key enzyme in the biosynthesis of NADP. Catalyzes specifically the phosphorylation on 2'-hydroxyl of the adenosine moiety of NAD to yield NADP. In Thermotoga neapolitana (strain ATCC 49049 / DSM 4359 / NBRC 107923 / NS-E), this protein is NAD kinase.